The chain runs to 648 residues: Cell surface glycoprotein MUC18 (648 aa).

Positions 1-23 (MGLPRLVCAFLFAACCCCRSATG) are cleaved as a signal peptide. 2 consecutive Ig-like V-type domains span residues 24–131 (VPGE…HYVQ) and 141–244 (PTIQ…KEVT). Topologically, residues 24-560 (VPGEEKQPTP…EKKLPQQESK (537 aa)) are extracellular. 5 cysteine pairs are disulfide-bonded: C50-C118, C163-C225, C274-C322, C367-C409, and C454-C501. The N-linked (GlcNAc...) asparagine glycan is linked to N58. Ig-like C2-type domains lie at 246 to 332 (PVLY…TTVM), 337 to 426 (PLEL…RRVS), and 432 to 512 (SPWM…SNTT). Positions 282-304 (PHFTINKKNPSTEEMEEESTDEN) are disordered. The N-linked (GlcNAc...) asparagine glycan is linked to N510. Residues 527–549 (DSSQTTGLSTPTVSPHSRANSTS) are compositionally biased toward polar residues. The segment at 527–554 (DSSQTTGLSTPTVSPHSRANSTSTEKKL) is disordered. A helical membrane pass occupies residues 561–581 (GVVIVAVIVCTLVLAVLGATL). The Cytoplasmic portion of the chain corresponds to 582 to 648 (YYFYKKGKLP…QGEKYIDLRH (67 aa)). Phosphoserine is present on residues S608 and S616. The disordered stretch occupies residues 626-648 (LQGSNGDKRAPGDQGEKYIDLRH). Positions 631–648 (GDKRAPGDQGEKYIDLRH) are enriched in basic and acidic residues.

Detected in lung, uterus and placenta (at protein level). Detected in heart, lung, kidney, adrenal gland, intestine, testis, skeletal muscle and aorta. Detected at low levels in adult brain, in particular in brain stem and spinal cord, but also in hippocampus, olfactory bulb and striatum (at protein level).

The protein localises to the cell membrane. The protein resides in the perikaryon. Functionally, plays a role in cell adhesion, and in cohesion of the endothelial monolayer at intercellular junctions in vascular tissue. Its expression may allow melanoma cells to interact with cellular elements of the vascular system, thereby enhancing hematogeneous tumor spread. Could be an adhesion molecule active in neural crest cells during embryonic development. Acts as a surface receptor that triggers tyrosine phosphorylation of FYN and PTK2/FAK1, and a transient increase in the intracellular calcium concentration. The sequence is that of Cell surface glycoprotein MUC18 (Mcam) from Rattus norvegicus (Rat).